The primary structure comprises 406 residues: MAPPGPASALSTSAEPLSRSIFRKFLLMLCSLLTSLYVFYCLAERCQTLSGPVVGLSGGGEEAGAPGGGVLAGGPRELAVWPAAAQRKRLLQLPQWRRRRPPAPRDDGEEAAWEEESPGLSGGPGGSGAGSTVAEAPPGTLALLLDEGSKQLPQAIIIGVKKGGTRALLEFLRVHPDVRAVGAEPHFFDRSYDKGLAWYRDLMPRTLDGQITMEKTPSYFVTREAPARISAMSKDTKLIVVVRDPVTRAISDYTQTLSKRPDIPTFESLTFKNRTAGLIDTSWSAIQIGIYAKHLEHWLRHFPIRQMLFVSGERLISDPAGELGRVQDFLGLKRIITDKHFYFNKTKGFPCLKKAEGSSRPHCLGKTKGRTHPEIDREVVRRLREFYRPFNLKFYQMTGHDFGWDG.

The Cytoplasmic segment spans residues Met1–Lys24. A helical; Signal-anchor for type II membrane protein membrane pass occupies residues Phe25–Ala43. The Lumenal segment spans residues Glu44–Gly406. Basic residues predominate over residues Gln92–Pro102. The disordered stretch occupies residues Gln92–Ala134. The span at Asp107–Ser117 shows a compositional bias: acidic residues. Over residues Leu120–Ala129 the composition is skewed to gly residues. A 3'-phosphoadenylyl sulfate-binding site is contributed by Lys162–Arg166. Substrate-binding positions include Arg166, Glu184–Arg190, and Lys215–Ser218. 3'-phosphoadenylyl sulfate is bound by residues Arg243 and Ser251. Substrate is bound at residue Gln255–Lys259. The N-linked (GlcNAc...) asparagine glycan is linked to Asn273. Trp283–Ser284 contributes to the substrate binding site. The N-linked (GlcNAc...) asparagine glycan is linked to Asn344. An intrachain disulfide couples Cys351 to Cys363. Thr367–Arg370 is a binding site for substrate. Residue Lys368–His372 coordinates 3'-phosphoadenylyl sulfate.

Belongs to the sulfotransferase 1 family. Ubiquitous. Most abundant in heart and placenta, followed by liver and kidney.

The protein resides in the golgi apparatus membrane. It carries out the reaction alpha-D-glucosaminyl-[heparan sulfate](n) + 3'-phosphoadenylyl sulfate = 3-sulfo-alpha-D-glucosaminyl-[heparan sulfate](n) + adenosine 3',5'-bisphosphate + H(+). Its function is as follows. Sulfotransferase that utilizes 3'-phospho-5'-adenylyl sulfate (PAPS) to catalyze the transfer of a sulfo group to an N-unsubstituted glucosamine linked to a 2-O-sulfo iduronic acid unit on heparan sulfate. Catalyzes the O-sulfation of glucosamine in IdoUA2S-GlcNS and also in IdoUA2S-GlcNH2. The substrate-specific O-sulfation generates an enzyme-modified heparan sulfate which acts as a binding receptor to Herpes simplex virus-1 (HSV-1) and permits its entry. Unlike HS3ST1/3-OST-1, does not convert non-anticoagulant heparan sulfate to anticoagulant heparan sulfate. This is Heparan sulfate glucosamine 3-O-sulfotransferase 3A1 (HS3ST3A1) from Homo sapiens (Human).